Consider the following 485-residue polypeptide: Hexokinase (485 aa).

Ser15 is subject to Phosphoserine. Residues 21-468 enclose the Hexokinase domain; sequence ANLMEQIHGL…SGVGAAIIAC (448 aa). The segment at 75-208 is hexokinase small subdomain; it reads TGKETGDFLA…NIPINVVALI (134 aa). Lys111 contacts ATP. A glucose-binding region spans residues 151-177; it reads PLGFTFSYPASQKKINSGVLQRWTKGF. The hexokinase large subdomain stretch occupies residues 209–457; the sequence is NDTTGTLVAS…HPIQLVAAED (249 aa).

As to quaternary structure, monomer and homodimer. The monomeric form is active, the homodimeric form inactive.

The enzyme catalyses a D-hexose + ATP = a D-hexose 6-phosphate + ADP + H(+). The catalysed reaction is D-fructose + ATP = D-fructose 6-phosphate + ADP + H(+). It catalyses the reaction D-glucose + ATP = D-glucose 6-phosphate + ADP + H(+). The protein operates within carbohydrate metabolism; hexose metabolism. It functions in the pathway carbohydrate degradation; glycolysis; D-glyceraldehyde 3-phosphate and glycerone phosphate from D-glucose: step 1/4. Functionally, catalyzes the phosphorylation of hexose, such as D-glucose and D-fructose, to hexose 6-phosphate (D-glucose 6-phosphate and D-fructose 6-phosphate, respectively). Has higher affinity for D-glucose. Mediates the initial step of glycolysis by catalyzing phosphorylation of D-glucose to D-glucose 6-phosphate. The polypeptide is Hexokinase (RAG5) (Kluyveromyces lactis (strain ATCC 8585 / CBS 2359 / DSM 70799 / NBRC 1267 / NRRL Y-1140 / WM37) (Yeast)).